Consider the following 433-residue polypeptide: Signal recognition particle 54 kDa protein (433 aa).

Residues 106-113, 186-190, and 244-247 contribute to the GTP site; these read GVEGSGKT, DTAGR, and TKMD.

This sequence belongs to the GTP-binding SRP family. SRP54 subfamily. As to quaternary structure, part of the signal recognition particle protein translocation system, which is composed of SRP and FtsY. Archaeal SRP consists of a 7S RNA molecule of 300 nucleotides and two protein subunits: SRP54 and SRP19.

The protein resides in the cytoplasm. It carries out the reaction GTP + H2O = GDP + phosphate + H(+). Functionally, involved in targeting and insertion of nascent membrane proteins into the cytoplasmic membrane. Binds to the hydrophobic signal sequence of the ribosome-nascent chain (RNC) as it emerges from the ribosomes. The SRP-RNC complex is then targeted to the cytoplasmic membrane where it interacts with the SRP receptor FtsY. The polypeptide is Signal recognition particle 54 kDa protein (Pyrobaculum neutrophilum (strain DSM 2338 / JCM 9278 / NBRC 100436 / V24Sta) (Thermoproteus neutrophilus)).